The primary structure comprises 393 residues: Metal tolerance protein A2 (393 aa).

Topologically, residues 1 to 72 (MVTPKLHLDL…EAQERAASMR (72 aa)) are cytoplasmic. Residues 73-93 (KLLIAVLLCAIFIVVEVVGGI) traverse the membrane as a helical segment. The Vacuolar segment spans residues 94–105 (KANSLAILTDAA). A helical transmembrane segment spans residues 106 to 126 (HLLSDVAAFAISLFSLWASGW). The Cytoplasmic segment spans residues 127–138 (KANPQQSYGFFR). Residues 139 to 159 (IEILGALVSIQMIWLLAGILV) form a helical membrane-spanning segment. The Vacuolar portion of the chain corresponds to 160–176 (YEAIVRLNNGSGEVEGS). The helical transmembrane segment at 177 to 197 (LMFAVSAVGLLVNIAMAILLG) threads the bilayer. The interval 198–233 (HDHGHGHGHSHDNGHGHSHDHGHGIAATEHHHDSGH) is required for zinc-binding. The Cytoplasmic segment spans residues 198 to 257 (HDHGHGHGHSHDNGHGHSHDHGHGIAATEHHHDSGHDESQLSDVLIEQKKQRNVNIQGAY). Residues 202–236 (HGHGHSHDNGHGHSHDHGHGIAATEHHHDSGHDES) are compositionally biased toward basic and acidic residues. Residues 202-237 (HGHGHSHDNGHGHSHDHGHGIAATEHHHDSGHDESQ) are disordered. A helical membrane pass occupies residues 258 to 278 (LHVLGDSIQSVGVMIGGAIIW). The Vacuolar segment spans residues 279-284 (YKPEWK). The helical transmembrane segment at 285 to 305 (ILDLICTLVFSVIVLGTTIGM) threads the bilayer. The Cytoplasmic segment spans residues 306–393 (LRNILEVLME…SHVTIQIERQ (88 aa)).

This sequence belongs to the cation diffusion facilitator (CDF) transporter (TC 2.A.4) family. SLC30A subfamily.

It localises to the membrane. Involved in sequestration of excess zinc in the cytoplasm into vacuoles to maintain zinc homeostasis. This Arabidopsis thaliana (Mouse-ear cress) protein is Metal tolerance protein A2 (MTPA2).